Here is a 1252-residue protein sequence, read N- to C-terminus: Fanconi anemia group J protein homolog (1252 aa).

The Helicase ATP-binding domain maps to 11–452 (GGVKIMFPCK…KDHEQLRAMC (442 aa)). Residues 164–181 (RKRIRPLETEQQVRKRHC) carry the Nuclear localization signal motif. 191–198 (ALEVYNQR) is a binding site for ATP. Residues cysteine 292, cysteine 308, cysteine 320, and cysteine 360 each coordinate [4Fe-4S] cluster. The DEAH box motif lies at 403–406 (DEAH). 2 disordered regions span residues 919–1008 (SKEP…DRTN) and 1212–1252 (TNGE…STST). Composition is skewed to polar residues over residues 920–930 (KEPSSASQQEA) and 952–969 (HLTT…NQPG). The segment covering 989 to 1008 (MDSTPRRPANKTEKKSDRTN) has biased composition (basic and acidic residues). A compositionally biased stretch (acidic residues) spans 1215–1224 (EEAEQVESQE). Residues 1228-1239 (KKRKISLSRSRN) are compositionally biased toward basic residues.

The protein belongs to the DEAD box helicase family. DEAH subfamily. Requires [4Fe-4S] cluster as cofactor.

Its subcellular location is the nucleus. The catalysed reaction is Couples ATP hydrolysis with the unwinding of duplex DNA at the replication fork by translocating in the 5'-3' direction. This creates two antiparallel DNA single strands (ssDNA). The leading ssDNA polymer is the template for DNA polymerase III holoenzyme which synthesizes a continuous strand.. The enzyme catalyses ATP + H2O = ADP + phosphate + H(+). DNA-dependent helicase and 5' to 3' DNA helicase required for the maintenance of chromosomal stability. Involved in the repair of DNA double-strand breaks by homologous recombination. Involved in the repair of abasic sites at replication forks by promoting the degradation of DNA-protein cross-links: acts by catalyzing unfolding of HMCES DNA-protein cross-link via its helicase activity, exposing the underlying DNA and enabling cleavage of the DNA-protein adduct by the SPRTN metalloprotease. The protein is Fanconi anemia group J protein homolog (BRIP1) of Gallus gallus (Chicken).